We begin with the raw amino-acid sequence, 353 residues long: Phosphate acyltransferase (353 aa).

This sequence belongs to the PlsX family. As to quaternary structure, homodimer. Probably interacts with PlsY.

The protein localises to the cytoplasm. It carries out the reaction a fatty acyl-[ACP] + phosphate = an acyl phosphate + holo-[ACP]. Its pathway is lipid metabolism; phospholipid metabolism. Functionally, catalyzes the reversible formation of acyl-phosphate (acyl-PO(4)) from acyl-[acyl-carrier-protein] (acyl-ACP). This enzyme utilizes acyl-ACP as fatty acyl donor, but not acyl-CoA. This is Phosphate acyltransferase from Rhodopseudomonas palustris (strain HaA2).